The sequence spans 250 residues: Trypsin (250 aa).

The first 15 residues, 1–15, serve as a signal peptide directing secretion; it reads MRLLALLLMVGAAVA. A propeptide spans 16-22 (activation peptide); that stretch reads VPREDGR. Residues 23-247 form the Peptidase S1 domain; sequence IIGGHECAAH…FLGWIERTLE (225 aa). 6 disulfide bridges follow: Cys29/Cys163, Cys47/Cys63, Cys133/Cys236, Cys140/Cys209, Cys174/Cys188, and Cys199/Cys223. Active-site charge relay system residues include His62 and Asp106. Catalysis depends on Ser203, which acts as the Charge relay system.

Belongs to the peptidase S1 family.

It is found in the secreted. The protein resides in the extracellular space. It catalyses the reaction Preferential cleavage: Arg-|-Xaa, Lys-|-Xaa.. The polypeptide is Trypsin (Pleuronectes platessa (European plaice)).